The chain runs to 294 residues: Probable cobalamin biosynthesis protein CobD (294 aa).

4 helical membrane-spanning segments follow: residues 52–72 (AGLL…IVPF), 73–93 (YAPF…SFAI), 145–165 (DSVV…AVIY), and 268–288 (IYWL…ATGV).

Belongs to the CobD/CbiB family.

The protein resides in the cell membrane. The protein operates within cofactor biosynthesis; adenosylcobalamin biosynthesis. In terms of biological role, converts cobyric acid to cobinamide by the addition of aminopropanol on the F carboxylic group. In Thermococcus kodakarensis (strain ATCC BAA-918 / JCM 12380 / KOD1) (Pyrococcus kodakaraensis (strain KOD1)), this protein is Probable cobalamin biosynthesis protein CobD.